The chain runs to 278 residues: Cytidine kinase (278 aa).

Thr-203–Gly-208 contacts ATP. Catalysis depends on Asp-237, which acts as the Proton acceptor.

Belongs to the carbohydrate kinase PfkB family. The cofactor is Mg(2+).

The catalysed reaction is cytidine + ATP = CMP + ADP + H(+). In terms of biological role, involved in nucleoside degradation. Phosphorylates cytidine to CMP. Can also act on deoxycytidine and uridine, but is most active with cytidine. ATP is the most preferred phosphate donor, but it can also use GTP, CTP or UTP. The sequence is that of Cytidine kinase from Thermococcus kodakarensis (strain ATCC BAA-918 / JCM 12380 / KOD1) (Pyrococcus kodakaraensis (strain KOD1)).